A 184-amino-acid chain; its full sequence is Probable RNA 2'-phosphotransferase (184 aa).

Belongs to the KptA/TPT1 family.

Removes the 2'-phosphate from RNA via an intermediate in which the phosphate is ADP-ribosylated by NAD followed by a presumed transesterification to release the RNA and generate ADP-ribose 1''-2''-cyclic phosphate (APPR&gt;P). May function as an ADP-ribosylase. The sequence is that of Probable RNA 2'-phosphotransferase from Burkholderia pseudomallei (strain K96243).